Consider the following 92-residue polypeptide: Acylphosphatase (92 aa).

An Acylphosphatase-like domain is found at 5–92 (RAHVVVSGKV…GEFSGFKIAF (88 aa)). Residues Arg20 and Asn38 contribute to the active site.

Belongs to the acylphosphatase family.

It carries out the reaction an acyl phosphate + H2O = a carboxylate + phosphate + H(+). The chain is Acylphosphatase (acyP) from Pelotomaculum thermopropionicum (strain DSM 13744 / JCM 10971 / SI).